The sequence spans 168 residues: G/U mismatch-specific DNA glycosylase (168 aa).

The protein belongs to the uracil-DNA glycosylase (UDG) superfamily. TDG/mug family. Binds DNA as a monomer.

It is found in the cytoplasm. It carries out the reaction Specifically hydrolyzes mismatched double-stranded DNA and polynucleotides, releasing free uracil.. Excises ethenocytosine and uracil, which can arise by alkylation or deamination of cytosine, respectively, from the corresponding mispairs with guanine in ds-DNA. It is capable of hydrolyzing the carbon-nitrogen bond between the sugar-phosphate backbone of the DNA and the mispaired base. The complementary strand guanine functions in substrate recognition. Required for DNA damage lesion repair in stationary-phase cells. This chain is G/U mismatch-specific DNA glycosylase, found in Cronobacter sakazakii (strain ATCC BAA-894) (Enterobacter sakazakii).